Here is a 217-residue protein sequence, read N- to C-terminus: Gas vesicle protein F2 (217 aa).

It belongs to the gas vesicle GvpF/GvpL family. As to quaternary structure, binds GvpA.

It localises to the gas vesicle. It is found in the cytoplasm. A minor component of the gas vesicle, may be involved in preventing GvpA aggregation during gas vesicle nucleation. Gas vesicles are hollow, gas filled proteinaceous nanostructures found in several microbial planktonic microorganisms. They allow positioning of halobacteria at the optimal depth for growth in the poorly aerated, shallow brine pools of their habitat. In terms of biological role, expression of 2 c-vac DNA fragments containing 2 divergently transcribed regions (gvpE-gvpF-gvpG-gvpH-gvpI-gvpJ-gvpK-gvpL-gvpM and gvpA-gvpC-gvpN-gvpO) allows H.volcanii to produce gas vesicles. Note that gvpD is not necessary for gas vesicle formation. The chain is Gas vesicle protein F2 from Halobacterium salinarum (strain ATCC 700922 / JCM 11081 / NRC-1) (Halobacterium halobium).